The chain runs to 158 residues: C-type lectin (158 aa).

A signal peptide spans 1–23; the sequence is MWQFTVVSLGWLAVFLSLSGAKG. Intrachain disulfides connect Cys26–Cys37, Cys54–Cys154, and Cys129–Cys146. The 123-residue stretch at 33 to 155 folds into the C-type lectin domain; that stretch reads RNGVCNKLFP…CASLHPFICQ (123 aa). The short motif at 119 to 121 is the Mannose-binding element; that stretch reads EPN. Residues Glu127, Asn142, and Asp143 each coordinate Ca(2+).

Belongs to the true venom lectin family. As to expression, expressed by the venom gland.

It localises to the secreted. In terms of biological role, mannose-binding lectin which recognizes specific carbohydrate structures and agglutinates a variety of animal cells by binding to cell-surface glycoproteins and glycolipids. May be a calcium-dependent lectin. This Cerberus rynchops (Dog-faced water snake) protein is C-type lectin.